A 361-amino-acid polypeptide reads, in one-letter code: 45 kDa calcium-binding protein (361 aa).

The first 35 residues, 1–35 (MVWLVAMTSRQRSLCGLAAHGLWFLGLVLLMDATA), serve as a signal peptide directing secretion. The N-linked (GlcNAc...) asparagine glycan is linked to Asn39. EF-hand domains are found at residues 97–132 (RSRR…KTAE) and 136–171 (EAVK…SKGH). At Ser98 the chain carries Phosphoserine. Residues Asp110, Asn112, Asp114, Arg116, Glu121, Asp149, Asp151, Asp153, His155, and Glu160 each contribute to the Ca(2+) site. A Phosphothreonine modification is found at Thr192. 4 consecutive EF-hand domains span residues 196–231 (LGNL…HSRG), 232–267 (MLKF…TVEN), 277–312 (WVKD…MNEY), and 313–348 (NALN…FTGS). Asp212 is a binding site for Ca(2+). Position 216 is a phosphothreonine (Thr216). Residues Glu219, Asp245, Asp247, Asp249, Gln251, and Glu256 each contribute to the Ca(2+) site. Thr264 bears the Phosphothreonine mark. Asp290, Asn292, and Asp294 together coordinate Ca(2+). Position 298 is a phosphothreonine (Thr298). The Ca(2+) site is built by Glu301, Asp326, Asn328, Asn330, His332, and Glu337. Residues 308-361 (PMNEYNALNEAKQMIAIADENQNHHLEPEEILKYSEFFTGSKLMDYARNVHEEF) form a necessary for intracellular retention in Golgi apparatus lumen region.

This sequence belongs to the CREC family. A membrane-associated isoform interacts with STX3 and STXBP1. As to expression, a membrane-associated isoform is expressed in acini of the pancreas (at protein level). Ubiquitous.

It localises to the golgi apparatus lumen. In terms of biological role, a membrane-associated isoform may be involved in the exocytosis of zymogens by pancreatic acini. May regulate calcium-dependent activities in the endoplasmic reticulum lumen or post-ER compartment. In Rattus norvegicus (Rat), this protein is 45 kDa calcium-binding protein (Sdf4).